The following is a 194-amino-acid chain: Lysozyme g-like protein 1 (194 aa).

The signal sequence occupies residues 1 to 19; that stretch reads MSALWLLLGLLALMDLSES. 2 disulfide bridges follow: cysteine 24–cysteine 80 and cysteine 38–cysteine 49.

It belongs to the glycosyl hydrolase 23 family.

It is found in the secreted. This Homo sapiens (Human) protein is Lysozyme g-like protein 1 (LYG1).